A 93-amino-acid chain; its full sequence is Cell division topological specificity factor (93 aa).

Belongs to the MinE family.

Prevents the cell division inhibition by proteins MinC and MinD at internal division sites while permitting inhibition at polar sites. This ensures cell division at the proper site by restricting the formation of a division septum at the midpoint of the long axis of the cell. The protein is Cell division topological specificity factor of Halorhodospira halophila (strain DSM 244 / SL1) (Ectothiorhodospira halophila (strain DSM 244 / SL1)).